A 78-amino-acid polypeptide reads, in one-letter code: Exodeoxyribonuclease 7 small subunit (78 aa).

The protein belongs to the XseB family. As to quaternary structure, heterooligomer composed of large and small subunits.

It is found in the cytoplasm. The catalysed reaction is Exonucleolytic cleavage in either 5'- to 3'- or 3'- to 5'-direction to yield nucleoside 5'-phosphates.. Functionally, bidirectionally degrades single-stranded DNA into large acid-insoluble oligonucleotides, which are then degraded further into small acid-soluble oligonucleotides. In Synechococcus sp. (strain JA-3-3Ab) (Cyanobacteria bacterium Yellowstone A-Prime), this protein is Exodeoxyribonuclease 7 small subunit.